Here is a 131-residue protein sequence, read N- to C-terminus: Profilin-2 (131 aa).

C13 and C115 form a disulfide bridge. The short motif at 81-97 is the Involved in PIP2 interaction element; it reads AVIRGKKGAGGITIKKT. At T111 the chain carries Phosphothreonine.

It belongs to the profilin family. In terms of assembly, occurs in many kinds of cells as a complex with monomeric actin in a 1:1 ratio. Phosphorylated by MAP kinases.

Its subcellular location is the cytoplasm. The protein localises to the cytoskeleton. Binds to actin and affects the structure of the cytoskeleton. At high concentrations, profilin prevents the polymerization of actin, whereas it enhances it at low concentrations. By binding to PIP2, it inhibits the formation of IP3 and DG. The protein is Profilin-2 (PRO2) of Phleum pratense (Common timothy).